Consider the following 623-residue polypeptide: Leucine aminopeptidase 2 (623 aa).

A peptide-binding positions include Q136–Q138 and P273–E278. H302 is a Zn(2+) binding site. E303 serves as the catalytic Proton acceptor. The Zn(2+) site is built by H306 and E325. Y390 (proton donor) is an active-site residue.

It belongs to the peptidase M1 family. Requires Zn(2+) as cofactor.

The protein resides in the cytoplasm. The protein localises to the nucleus. It carries out the reaction an epoxide + H2O = an ethanediol. Aminopeptidase that preferentially cleaves di- and tripeptides. Also has low epoxide hydrolase activity (in vitro). Can hydrolyze the epoxide leukotriene LTA(4) but it forms preferentially 5,6-dihydroxy-7,9,11,14-eicosatetraenoic acid rather than the cytokine leukotriene B(4) as the product compared to the homologous mammalian enzyme (in vitro). The protein is Leucine aminopeptidase 2 of Phaeosphaeria nodorum (strain SN15 / ATCC MYA-4574 / FGSC 10173) (Glume blotch fungus).